Reading from the N-terminus, the 338-residue chain is Inositol 2-dehydrogenase 3 (338 aa).

Belongs to the Gfo/Idh/MocA family. Homotetramer.

The catalysed reaction is myo-inositol + NAD(+) = scyllo-inosose + NADH + H(+). Involved in the oxidation of myo-inositol (MI) to 2-keto-myo-inositol (2KMI or 2-inosose). The sequence is that of Inositol 2-dehydrogenase 3 from Saccharopolyspora erythraea (strain ATCC 11635 / DSM 40517 / JCM 4748 / NBRC 13426 / NCIMB 8594 / NRRL 2338).